The following is a 326-amino-acid chain: Vomeronasal type-1 receptor 100 (326 aa).

The Extracellular portion of the chain corresponds to 1–32 (MSEFPFFSPQPLFSYMMNKNSRVHTDSNIRNT). A helical transmembrane segment spans residues 33-53 (FFTEIGIGILANSFLLLFHIF). The Cytoplasmic portion of the chain corresponds to 54–70 (KFIRGQRSRLTDLPIGL). The chain crosses the membrane as a helical span at residues 71–91 (LSLIHLLMLLMGAFIAIDIFI). Topologically, residues 92–104 (SWRGWDDIICKFL) are extracellular. C101 and C188 are joined by a disulfide. A helical membrane pass occupies residues 105 to 127 (VYLYRSFRGLSLCTTCMLSVLQA). The Cytoplasmic segment spans residues 128–149 (ITLSPRSSCLAKFKHKSPHHVS). The chain crosses the membrane as a helical span at residues 150–170 (CAIISLSILYMFISSHLLVSI). The Extracellular portion of the chain corresponds to 171-209 (NATPNLTTNNFMQVTQSCYIIPLSYLMQSMFSTLLAIRD). Residue N175 is glycosylated (N-linked (GlcNAc...) asparagine). Residues 210–230 (ISLISLMVLSTCYMVVLLCRH) form a helical membrane-spanning segment. The Cytoplasmic segment spans residues 231-254 (RNQIQHLQGTNLSPKASPEQRATQ). Residues 255–275 (TILMLMTFFVLMSIFDSIVSC) form a helical membrane-spanning segment. Over 276–285 (SRTMYLNDPT) the chain is Extracellular. A helical transmembrane segment spans residues 286 to 306 (SYYIQIFVVYIYATVSPFVFM). Topologically, residues 307-326 (STEKHIVNFLKSMCVRVKNV) are cytoplasmic.

Belongs to the G-protein coupled receptor 1 family. Expressed in 1-4% of neurons of the vomeronasal organ. Only one pheromone receptor gene may be expressed in a particular neuron. Not expressed in the main olfactory epithelium.

It is found in the cell membrane. In terms of biological role, putative pheromone receptor implicated in the regulation of social as well as reproductive behavior. This chain is Vomeronasal type-1 receptor 100 (Vom1r100), found in Rattus norvegicus (Rat).